The primary structure comprises 323 residues: Elongation factor P--(R)-beta-lysine ligase (323 aa).

74–76 (SPE) contributes to the substrate binding site. Residues 98-100 (RNE) and N107 each bind ATP. Substrate is bound at residue Y116. An ATP-binding site is contributed by 242–243 (EL). Substrate is bound at residue E249. Residue G298 participates in ATP binding.

It belongs to the class-II aminoacyl-tRNA synthetase family. EpmA subfamily. As to quaternary structure, homodimer.

It catalyses the reaction D-beta-lysine + L-lysyl-[protein] + ATP = N(6)-((3R)-3,6-diaminohexanoyl)-L-lysyl-[protein] + AMP + diphosphate + H(+). With EpmB is involved in the beta-lysylation step of the post-translational modification of translation elongation factor P (EF-P). Catalyzes the ATP-dependent activation of (R)-beta-lysine produced by EpmB, forming a lysyl-adenylate, from which the beta-lysyl moiety is then transferred to the epsilon-amino group of a conserved specific lysine residue in EF-P. The sequence is that of Elongation factor P--(R)-beta-lysine ligase from Vibrio campbellii (strain ATCC BAA-1116).